Here is a 106-residue protein sequence, read N- to C-terminus: Small membrane A-kinase anchor protein (106 aa).

G2 is lipidated: N-myristoyl glycine. Residue C3 is the site of S-palmitoyl cysteine attachment. S40 carries the phosphoserine modification. Positions 62–85 (ALILEFADRLASEIVEDALQQWAC) are PKA-RI-binding. S98 is modified (phosphoserine).

Belongs to the small membrane AKAP family. Interacts with PKA type I regulatory subunits PRKAR1A and PRKAR1B. Also binds to type II regulatory subunits, but at a tenfold lower affinity. May be palmitoylated at Cys-3. Widely expressed, with very low levels in spleen and liver.

The protein localises to the cell membrane. In terms of biological role, binds to type I regulatory subunits of protein kinase A (PKA-RI) and may anchor/target them to the plasma membrane. The sequence is that of Small membrane A-kinase anchor protein from Mus musculus (Mouse).